A 396-amino-acid chain; its full sequence is Tryptophan synthase beta chain (396 aa).

At lysine 86 the chain carries N6-(pyridoxal phosphate)lysine.

Belongs to the TrpB family. In terms of assembly, tetramer of two alpha and two beta chains. Requires pyridoxal 5'-phosphate as cofactor.

The enzyme catalyses (1S,2R)-1-C-(indol-3-yl)glycerol 3-phosphate + L-serine = D-glyceraldehyde 3-phosphate + L-tryptophan + H2O. The protein operates within amino-acid biosynthesis; L-tryptophan biosynthesis; L-tryptophan from chorismate: step 5/5. Functionally, the beta subunit is responsible for the synthesis of L-tryptophan from indole and L-serine. This Aliivibrio salmonicida (strain LFI1238) (Vibrio salmonicida (strain LFI1238)) protein is Tryptophan synthase beta chain.